We begin with the raw amino-acid sequence, 710 residues long: Chloride channel protein CLC-e (710 aa).

The next 12 helical transmembrane spans lie at 74 to 94 (ELAI…VVLF), 122 to 142 (IGSN…VVSI), 164 to 184 (VKAV…LGTG), 193 to 213 (SVEI…KSPQ), 222 to 242 (GSAA…FFAV), 261 to 281 (TTSM…IGLG), 296 to 316 (PGEL…SLAL), 340 to 360 (VFPV…PEVL), 379 to 399 (GLSA…TAWC), 412 to 432 (SLFI…LALA), 451 to 471 (GLVG…TAVL), and 472 to 492 (LLFE…AVGM). The interval 500-534 (QSKRQETRETKETRKRKSQEAVQSLTSSDDESSTN) is disordered. Basic and acidic residues predominate over residues 502 to 511 (KRQETRETKE). Polar residues predominate over residues 520–534 (AVQSLTSSDDESSTN). CBS domains follow at residues 565–624 (MRTR…GNNR) and 640–702 (KCKV…ATRM). Residues 667–687 (HVAVVSGSIDAPRIHPVGVLD) traverse the membrane as a helical segment.

This sequence belongs to the chloride channel (TC 2.A.49) family. In terms of assembly, homodimer.

The protein resides in the membrane. It catalyses the reaction 2 chloride(in) + H(+)(out) = 2 chloride(out) + H(+)(in). Voltage-gated thylakoid chloride (Cl) channel/transporter involved in chloride homeostasis after transition from light to dark. Influences chloroplast ultrastructure and subsequent photosynthetic electron transport. During photosynthetic response on transition from dark to low light, involved in a sequential mechanism of adaptation; VCCN1 and CLCe first trigger the activation of photoprotection, which is later down-regulated by KEA3 to a low steady state, while adjusting electron transport. Regulates photosynthesis by a pH-independent mechanism likely involving Cl(-) homeostasis. This chain is Chloride channel protein CLC-e, found in Arabidopsis thaliana (Mouse-ear cress).